Here is a 130-residue protein sequence, read N- to C-terminus: Lysozyme C, kidney isozyme (130 aa).

In terms of domain architecture, C-type lysozyme spans 1–130 (KVFERCELAR…LTSYIQGCGV (130 aa)). 4 disulfides stabilise this stretch: Cys6–Cys128, Cys30–Cys116, Cys65–Cys81, and Cys77–Cys95. Catalysis depends on residues Glu35 and Asp53.

It belongs to the glycosyl hydrolase 22 family. Monomer.

Its subcellular location is the secreted. The enzyme catalyses Hydrolysis of (1-&gt;4)-beta-linkages between N-acetylmuramic acid and N-acetyl-D-glucosamine residues in a peptidoglycan and between N-acetyl-D-glucosamine residues in chitodextrins.. In terms of biological role, lysozymes have primarily a bacteriolytic function; those in tissues and body fluids are associated with the monocyte-macrophage system and enhance the activity of immunoagents. The chain is Lysozyme C, kidney isozyme from Ovis aries (Sheep).